The chain runs to 266 residues: Tryptophan synthase alpha chain (266 aa).

Active-site proton acceptor residues include glutamate 49 and aspartate 60.

It belongs to the TrpA family. As to quaternary structure, tetramer of two alpha and two beta chains.

The catalysed reaction is (1S,2R)-1-C-(indol-3-yl)glycerol 3-phosphate + L-serine = D-glyceraldehyde 3-phosphate + L-tryptophan + H2O. Its pathway is amino-acid biosynthesis; L-tryptophan biosynthesis; L-tryptophan from chorismate: step 5/5. Functionally, the alpha subunit is responsible for the aldol cleavage of indoleglycerol phosphate to indole and glyceraldehyde 3-phosphate. The protein is Tryptophan synthase alpha chain of Shewanella amazonensis (strain ATCC BAA-1098 / SB2B).